We begin with the raw amino-acid sequence, 77 residues long: Major pilus subunit operon regulatory protein (77 aa).

It to E.coli AfaF and DaaF.

Functionally, plays a role in the inhibition of methylation at the GATC1028 site located in the regulatory region upstream of the pabA promoter. May, in conjunction with the Mbf (methylation blocking factor), inhibits deoxyadenosine methylase from methylating the GATC1028 site. This chain is Major pilus subunit operon regulatory protein (papI), found in Escherichia coli.